The primary structure comprises 289 residues: Acetyl-coenzyme A carboxylase carboxyl transferase subunit beta (289 aa).

Residues 30–289 (IWRECPRCHS…SNAWRANHDK (260 aa)) form the CoA carboxyltransferase N-terminal domain. Zn(2+) is bound by residues Cys-34, Cys-37, Cys-52, and Cys-55. A C4-type zinc finger spans residues 34-55 (CPRCHSRFYYRRFGNFDVCPEC).

Belongs to the AccD/PCCB family. In terms of assembly, acetyl-CoA carboxylase is a heterohexamer composed of biotin carboxyl carrier protein (AccB), biotin carboxylase (AccC) and two subunits each of ACCase subunit alpha (AccA) and ACCase subunit beta (AccD). The cofactor is Zn(2+).

The protein localises to the cytoplasm. It catalyses the reaction N(6)-carboxybiotinyl-L-lysyl-[protein] + acetyl-CoA = N(6)-biotinyl-L-lysyl-[protein] + malonyl-CoA. Its pathway is lipid metabolism; malonyl-CoA biosynthesis; malonyl-CoA from acetyl-CoA: step 1/1. Component of the acetyl coenzyme A carboxylase (ACC) complex. Biotin carboxylase (BC) catalyzes the carboxylation of biotin on its carrier protein (BCCP) and then the CO(2) group is transferred by the transcarboxylase to acetyl-CoA to form malonyl-CoA. The protein is Acetyl-coenzyme A carboxylase carboxyl transferase subunit beta of Oenococcus oeni (strain ATCC BAA-331 / PSU-1).